A 176-amino-acid chain; its full sequence is Ribosome rescue factor SmrB (176 aa).

Positions 98–173 (LDLHGLNQYQ…NDAAIMVIIE (76 aa)) constitute a Smr domain.

This sequence belongs to the SmrB family. Associates with collided ribosomes, but not with correctly translating polysomes.

Acts as a ribosome collision sensor. Detects stalled/collided disomes (pairs of ribosomes where the leading ribosome is stalled and a second ribosome has collided with it) and endonucleolytically cleaves mRNA at the 5' boundary of the stalled ribosome. Stalled/collided disomes form a new interface (primarily via the 30S subunits) that binds SmrB. Cleaved mRNA becomes available for tmRNA ligation, leading to ribosomal subunit dissociation and rescue of stalled ribosomes. This is Ribosome rescue factor SmrB from Buchnera aphidicola subsp. Schizaphis graminum (strain Sg).